We begin with the raw amino-acid sequence, 467 residues long: Zinc finger protein ZIC 3 (467 aa).

Positions 66 to 107 (LSSGQSSAFTPQGSGYANALGHHHHHHHHHHHTSQVPSYGGA) are disordered. Residues 67–80 (SSGQSSAFTPQGSG) are compositionally biased toward polar residues. A compositionally biased stretch (basic residues) spans 86 to 98 (GHHHHHHHHHHHT). Lys-248 is covalently cross-linked (Glycyl lysine isopeptide (Lys-Gly) (interchain with G-Cter in SUMO2)). The C2H2-type 1; atypical zinc-finger motif lies at 251–286 (LSCKWIDEAQLSRPKKSCDRTFSTMHELVTHVTMEH). A C2H2-type 2; atypical zinc finger spans residues 295-322 (HVCYWEECPREGKSFKAKYKLVNHIRVH). 2 short sequence motifs (nuclear localization signal) span residues 297-322 (CYWEECPREGKSFKAKYKLVNHIRVH) and 330-352 (CPFPGCGKIFARSENLKIHKRTH). 3 consecutive C2H2-type zinc fingers follow at residues 328-352 (FPCPFPGCGKIFARSENLKIHKRTH), 358-382 (FKCEFEGCDRRFANSSDRKKHMHVH), and 388-410 (YICKVCDKSYTHPSSLRKHMKVH). The interval 404-467 (RKHMKVHESQ…LPPNFNEWYV (64 aa)) is disordered. Residues 412–428 (SQGSDSSPAASSGYESS) show a composition bias toward low complexity. The span at 435–455 (SANSKDTTKTPSAVQTSTSHN) shows a compositional bias: polar residues.

This sequence belongs to the GLI C2H2-type zinc-finger protein family. As to quaternary structure, interacts (via the C2H2-type domains 3, 4 and 5) with MDFIC (via the C2H2-type domains 3, 4 and 5); the interaction reduces its transcriptional activity. Interacts with KPNA1 and KPNA6. Interacts (via C2H2-type domains 3, 4 and 5) with GLI3; the interaction enhances its transcriptional activity.

It is found in the nucleus. The protein localises to the cytoplasm. Functionally, acts as a transcriptional activator. Required in the earliest stages in both axial midline development and left-right (LR) asymmetry specification. Binds to the minimal GLI-consensus sequence 5'-GGGTGGTC-3'. This is Zinc finger protein ZIC 3 (ZIC3) from Homo sapiens (Human).